The chain runs to 178 residues: 6,7-dimethyl-8-ribityllumazine synthase (178 aa).

5-amino-6-(D-ribitylamino)uracil-binding positions include Y27, 58–60 (SLE), and 82–84 (CVI). 87–88 (AT) is a binding site for (2S)-2-hydroxy-3-oxobutyl phosphate. The active-site Proton donor is the H90. N114 contacts 5-amino-6-(D-ribitylamino)uracil. R128 serves as a coordination point for (2S)-2-hydroxy-3-oxobutyl phosphate.

The protein belongs to the DMRL synthase family.

It carries out the reaction (2S)-2-hydroxy-3-oxobutyl phosphate + 5-amino-6-(D-ribitylamino)uracil = 6,7-dimethyl-8-(1-D-ribityl)lumazine + phosphate + 2 H2O + H(+). It functions in the pathway cofactor biosynthesis; riboflavin biosynthesis; riboflavin from 2-hydroxy-3-oxobutyl phosphate and 5-amino-6-(D-ribitylamino)uracil: step 1/2. Catalyzes the formation of 6,7-dimethyl-8-ribityllumazine by condensation of 5-amino-6-(D-ribitylamino)uracil with 3,4-dihydroxy-2-butanone 4-phosphate. This is the penultimate step in the biosynthesis of riboflavin. The sequence is that of 6,7-dimethyl-8-ribityllumazine synthase from Jannaschia sp. (strain CCS1).